The following is a 175-amino-acid chain: Shikimate kinase (175 aa).

Residue 14-19 participates in ATP binding; that stretch reads GAGKST. A Mg(2+)-binding site is contributed by S18. 3 residues coordinate substrate: D36, R60, and G82. R120 lines the ATP pocket. R140 is a substrate binding site. Q157 is an ATP binding site.

This sequence belongs to the shikimate kinase family. Monomer. Requires Mg(2+) as cofactor.

It is found in the cytoplasm. The enzyme catalyses shikimate + ATP = 3-phosphoshikimate + ADP + H(+). It participates in metabolic intermediate biosynthesis; chorismate biosynthesis; chorismate from D-erythrose 4-phosphate and phosphoenolpyruvate: step 5/7. Catalyzes the specific phosphorylation of the 3-hydroxyl group of shikimic acid using ATP as a cosubstrate. This Histophilus somni (strain 2336) (Haemophilus somnus) protein is Shikimate kinase.